A 445-amino-acid chain; its full sequence is Serine--tRNA ligase (445 aa).

229 to 231 is an L-serine binding site; that stretch reads TAE. Residues 260–262 and Val-276 each bind ATP; that span reads RKE. Glu-283 serves as a coordination point for L-serine. Residue 347–350 participates in ATP binding; it reads EVSS. Ser-383 lines the L-serine pocket.

This sequence belongs to the class-II aminoacyl-tRNA synthetase family. Type-1 seryl-tRNA synthetase subfamily. As to quaternary structure, homodimer. The tRNA molecule binds across the dimer.

It is found in the cytoplasm. It carries out the reaction tRNA(Ser) + L-serine + ATP = L-seryl-tRNA(Ser) + AMP + diphosphate + H(+). The catalysed reaction is tRNA(Sec) + L-serine + ATP = L-seryl-tRNA(Sec) + AMP + diphosphate + H(+). It functions in the pathway aminoacyl-tRNA biosynthesis; selenocysteinyl-tRNA(Sec) biosynthesis; L-seryl-tRNA(Sec) from L-serine and tRNA(Sec): step 1/1. Functionally, catalyzes the attachment of serine to tRNA(Ser). Is also able to aminoacylate tRNA(Sec) with serine, to form the misacylated tRNA L-seryl-tRNA(Sec), which will be further converted into selenocysteinyl-tRNA(Sec). The chain is Serine--tRNA ligase from Thermomicrobium roseum (strain ATCC 27502 / DSM 5159 / P-2).